Here is a 253-residue protein sequence, read N- to C-terminus: E3 ubiquitin-protein ligase MARCHF3 (253 aa).

The RING-CH-type zinc finger occupies 63-123 (SPFNDRPMCR…ELCHFRFAVE (61 aa)). Zn(2+) contacts are provided by Cys71, Cys74, Cys87, Cys89, His97, Cys100, Cys113, and Cys116. 2 helical membrane passes run 145–165 (LFGDMVCFLFITPLATISGWL) and 182–202 (AVGLIALTVALFTIYLFWTLV). Residues Ser237 and Ser243 each carry the phosphoserine modification.

As to quaternary structure, interacts with MARCHF2 and STX6. Expressed predominantly in lung, colon and spleen. Present in liver (at protein level).

It localises to the cytoplasmic vesicle membrane. It is found in the early endosome membrane. The enzyme catalyses S-ubiquitinyl-[E2 ubiquitin-conjugating enzyme]-L-cysteine + [acceptor protein]-L-lysine = [E2 ubiquitin-conjugating enzyme]-L-cysteine + N(6)-ubiquitinyl-[acceptor protein]-L-lysine.. Its pathway is protein modification; protein ubiquitination. E3 ubiquitin-protein ligase which may be involved in endosomal trafficking. E3 ubiquitin ligases accept ubiquitin from an E2 ubiquitin-conjugating enzyme in the form of a thioester and then directly transfer the ubiquitin to targeted substrates. This chain is E3 ubiquitin-protein ligase MARCHF3 (Marchf3), found in Rattus norvegicus (Rat).